A 545-amino-acid polypeptide reads, in one-letter code: Oligopeptide-binding protein OppA (545 aa).

Positions 1 to 20 are cleaved as a signal peptide; it reads MKKRWSIVTLMLIFTLVLSA. A lipid anchor (N-palmitoyl cysteine) is attached at C21. C21 carries the S-diacylglycerol cysteine lipid modification. The residue at position 470 (T470) is a Phosphothreonine.

Belongs to the bacterial solute-binding protein 5 family. As to quaternary structure, the complex is composed of two ATP-binding proteins (OppD and OppF), two transmembrane proteins (OppB and OppC) and a solute-binding protein (OppA). OppA interacts with FloT in detergent-resistant membranes (DRM). Colocalizes rarely with FloT membrane assemblies.

Its subcellular location is the cell membrane. The protein localises to the membrane raft. Its function is as follows. Part of the ABC transporter complex OppABCDF involved in the uptake of oligopeptides. Plays an important nutritional role. Binds peptides containing up to five amino acids residues regardless of their sequence, with highest affinity for tetra- and pentapeptides. Binds to the sporulation-promoting peptide PhrE (Ser-Arg-Asn-Val-Thr). Required for sporulation and genetic competence. This is Oligopeptide-binding protein OppA from Bacillus subtilis (strain 168).